A 461-amino-acid chain; its full sequence is Trigger factor (461 aa).

The 88-residue stretch at 169–256 folds into the PPIase FKBP-type domain; that stretch reads GDTAVIDFAG…LKDLKIKELP (88 aa). A disordered region spans residues 432-461; sequence PGEAIEPGSGEDAPPEVAAGATEPEAQPNS.

It belongs to the FKBP-type PPIase family. Tig subfamily.

It is found in the cytoplasm. It carries out the reaction [protein]-peptidylproline (omega=180) = [protein]-peptidylproline (omega=0). Involved in protein export. Acts as a chaperone by maintaining the newly synthesized protein in an open conformation. Functions as a peptidyl-prolyl cis-trans isomerase. In Gloeobacter violaceus (strain ATCC 29082 / PCC 7421), this protein is Trigger factor.